Here is a 465-residue protein sequence, read N- to C-terminus: Cysteine--tRNA ligase (465 aa).

A Zn(2+)-binding site is contributed by cysteine 27. A 'HIGH' region motif is present at residues 29–39 (PTTYNYIHIGN). Residues cysteine 207, histidine 232, and glutamate 236 each contribute to the Zn(2+) site. Positions 264–268 (KMSKS) match the 'KMSKS' region motif. Residue lysine 267 participates in ATP binding.

This sequence belongs to the class-I aminoacyl-tRNA synthetase family. In terms of assembly, monomer. Zn(2+) is required as a cofactor.

It localises to the cytoplasm. It carries out the reaction tRNA(Cys) + L-cysteine + ATP = L-cysteinyl-tRNA(Cys) + AMP + diphosphate. In Carboxydothermus hydrogenoformans (strain ATCC BAA-161 / DSM 6008 / Z-2901), this protein is Cysteine--tRNA ligase.